A 387-amino-acid polypeptide reads, in one-letter code: ATP phosphoribosyltransferase regulatory subunit (387 aa).

This sequence belongs to the class-II aminoacyl-tRNA synthetase family. HisZ subfamily. As to quaternary structure, heteromultimer composed of HisG and HisZ subunits.

It localises to the cytoplasm. It functions in the pathway amino-acid biosynthesis; L-histidine biosynthesis; L-histidine from 5-phospho-alpha-D-ribose 1-diphosphate: step 1/9. In terms of biological role, required for the first step of histidine biosynthesis. May allow the feedback regulation of ATP phosphoribosyltransferase activity by histidine. The polypeptide is ATP phosphoribosyltransferase regulatory subunit (Polynucleobacter asymbioticus (strain DSM 18221 / CIP 109841 / QLW-P1DMWA-1) (Polynucleobacter necessarius subsp. asymbioticus)).